A 543-amino-acid polypeptide reads, in one-letter code: CTP synthase (543 aa).

An amidoligase domain region spans residues 1 to 265; sequence MTRYIFVTGG…DDFVVERFGL (265 aa). Ser13 serves as a coordination point for CTP. Ser13 lines the UTP pocket. ATP-binding positions include 14–19 and Asp71; that span reads SLGKGI. Mg(2+) contacts are provided by Asp71 and Glu139. CTP-binding positions include 146–148, 186–191, and Lys222; these read DIE and KTKPTQ. Residues 186-191 and Lys222 each bind UTP; that span reads KTKPTQ. In terms of domain architecture, Glutamine amidotransferase type-1 spans 290-541; the sequence is TIAMVGKYME…VKAALAQHQK (252 aa). Gly351 lines the L-glutamine pocket. Cys378 (nucleophile; for glutamine hydrolysis) is an active-site residue. L-glutamine-binding positions include 379-382, Glu402, and Arg469; that span reads LGMQ. Active-site residues include His514 and Glu516.

It belongs to the CTP synthase family. In terms of assembly, homotetramer.

It carries out the reaction UTP + L-glutamine + ATP + H2O = CTP + L-glutamate + ADP + phosphate + 2 H(+). The enzyme catalyses L-glutamine + H2O = L-glutamate + NH4(+). The catalysed reaction is UTP + NH4(+) + ATP = CTP + ADP + phosphate + 2 H(+). Its pathway is pyrimidine metabolism; CTP biosynthesis via de novo pathway; CTP from UDP: step 2/2. Allosterically activated by GTP, when glutamine is the substrate; GTP has no effect on the reaction when ammonia is the substrate. The allosteric effector GTP functions by stabilizing the protein conformation that binds the tetrahedral intermediate(s) formed during glutamine hydrolysis. Inhibited by the product CTP, via allosteric rather than competitive inhibition. Functionally, catalyzes the ATP-dependent amination of UTP to CTP with either L-glutamine or ammonia as the source of nitrogen. Regulates intracellular CTP levels through interactions with the four ribonucleotide triphosphates. This chain is CTP synthase, found in Pseudomonas savastanoi pv. phaseolicola (strain 1448A / Race 6) (Pseudomonas syringae pv. phaseolicola (strain 1448A / Race 6)).